Reading from the N-terminus, the 254-residue chain is Imidazole glycerol phosphate synthase subunit HisF (254 aa).

Catalysis depends on residues D11 and D130.

This sequence belongs to the HisA/HisF family. In terms of assembly, heterodimer of HisH and HisF.

The protein localises to the cytoplasm. It catalyses the reaction 5-[(5-phospho-1-deoxy-D-ribulos-1-ylimino)methylamino]-1-(5-phospho-beta-D-ribosyl)imidazole-4-carboxamide + L-glutamine = D-erythro-1-(imidazol-4-yl)glycerol 3-phosphate + 5-amino-1-(5-phospho-beta-D-ribosyl)imidazole-4-carboxamide + L-glutamate + H(+). The protein operates within amino-acid biosynthesis; L-histidine biosynthesis; L-histidine from 5-phospho-alpha-D-ribose 1-diphosphate: step 5/9. In terms of biological role, IGPS catalyzes the conversion of PRFAR and glutamine to IGP, AICAR and glutamate. The HisF subunit catalyzes the cyclization activity that produces IGP and AICAR from PRFAR using the ammonia provided by the HisH subunit. The chain is Imidazole glycerol phosphate synthase subunit HisF from Halorhodospira halophila (strain DSM 244 / SL1) (Ectothiorhodospira halophila (strain DSM 244 / SL1)).